The chain runs to 516 residues: Putative thymidine phosphorylase (516 aa).

Belongs to the thymidine/pyrimidine-nucleoside phosphorylase family. Type 2 subfamily.

It catalyses the reaction thymidine + phosphate = 2-deoxy-alpha-D-ribose 1-phosphate + thymine. The chain is Putative thymidine phosphorylase from Methylococcus capsulatus (strain ATCC 33009 / NCIMB 11132 / Bath).